Reading from the N-terminus, the 311-residue chain is Ornithine carbamoyltransferase (311 aa).

Carbamoyl phosphate-binding positions include 56–59 (STRT), Gln83, Arg107, and 134–137 (HPTQ). Residues Asn166, Asp230, and 234 to 235 (SM) contribute to the L-ornithine site. Residues 270 to 271 (CL) and Lys298 each bind carbamoyl phosphate.

It belongs to the aspartate/ornithine carbamoyltransferase superfamily. OTCase family.

Its subcellular location is the cytoplasm. The catalysed reaction is carbamoyl phosphate + L-ornithine = L-citrulline + phosphate + H(+). It functions in the pathway amino-acid degradation; L-arginine degradation via ADI pathway; carbamoyl phosphate from L-arginine: step 2/2. Functionally, reversibly catalyzes the transfer of the carbamoyl group from carbamoyl phosphate (CP) to the N(epsilon) atom of ornithine (ORN) to produce L-citrulline. The sequence is that of Ornithine carbamoyltransferase from Ignicoccus hospitalis (strain KIN4/I / DSM 18386 / JCM 14125).